The sequence spans 312 residues: MEFTPISPPTRVAGGEEDSERGAAAWAVVEKEHMFEKVVTPSDVGKLNRLVIPKQHAERYFPLDAAAGAGGGGGGGGGGGGGKGLVLSFEDRTGKAWRFRYSYWNSSQSYVMTKGWSRFVKEKRLGAGDTVSFGRGLGDAARGRLFIDFRRRRQDAGSFMFPPTAAPPSHSHHHHQRHHPPLPSVPLCPWRDYTTAYGGGYGYGYGGGSTPASSRHVLFLRPQVPAAVVLKSVPVHVAATSAVQEAATTTRPKRVRLFGVNLDCPAAMDDDDDIAGAASRTAASSLLQLPSPSSSTSSSTAGKKMCSLDLGL.

The TF-B3 DNA-binding region spans 35 to 153 (FEKVVTPSDV…RLFIDFRRRR (119 aa)). Disordered stretches follow at residues 161 to 182 (FPPTAAPPSHSHHHHQRHHPPL) and 286 to 312 (LLQLPSPSSSTSSSTAGKKMCSLDLGL). A compositionally biased stretch (basic residues) spans 170–180 (HSHHHHQRHHP). Residues 286 to 301 (LLQLPSPSSSTSSSTA) show a composition bias toward low complexity.

It localises to the nucleus. The protein is Putative B3 domain-containing protein Os10g0537100 of Oryza sativa subsp. japonica (Rice).